A 467-amino-acid polypeptide reads, in one-letter code: ATP synthase subunit beta (467 aa).

An ATP-binding site is contributed by 152-159; it reads GGAGVGKT.

It belongs to the ATPase alpha/beta chains family. As to quaternary structure, F-type ATPases have 2 components, CF(1) - the catalytic core - and CF(0) - the membrane proton channel. CF(1) has five subunits: alpha(3), beta(3), gamma(1), delta(1), epsilon(1). CF(0) has three main subunits: a(1), b(2) and c(9-12). The alpha and beta chains form an alternating ring which encloses part of the gamma chain. CF(1) is attached to CF(0) by a central stalk formed by the gamma and epsilon chains, while a peripheral stalk is formed by the delta and b chains.

The protein localises to the cell membrane. It catalyses the reaction ATP + H2O + 4 H(+)(in) = ADP + phosphate + 5 H(+)(out). Its function is as follows. Produces ATP from ADP in the presence of a proton gradient across the membrane. The catalytic sites are hosted primarily by the beta subunits. The chain is ATP synthase subunit beta from Caldicellulosiruptor saccharolyticus (strain ATCC 43494 / DSM 8903 / Tp8T 6331).